The primary structure comprises 396 residues: Decapping and exoribonuclease protein (396 aa).

Basic and acidic residues predominate over residues 1–20 (MDPRGTKRGAEKTEVAEPRN). Residues 1 to 37 (MDPRGTKRGAEKTEVAEPRNKLPRPAPSLPTDPALYS) form a disordered region. Substrate is bound by residues arginine 58, glutamate 101, and 131–133 (WRG). Residue glutamate 192 participates in Mg(2+) binding. The substrate site is built by cysteine 217 and glutamate 234. Residues glutamate 234, aspartate 236, glutamate 253, and leucine 254 each contribute to the Mg(2+) site. Substrate contacts are provided by lysine 255 and glutamine 280. Threonine 392 bears the Phosphothreonine mark. The residue at position 394 (serine 394) is a Phosphoserine.

It belongs to the DXO/Dom3Z family. The cofactor is Mg(2+). Ubiquitously expressed.

It is found in the nucleus. It carries out the reaction a 5'-end triphospho-ribonucleoside in mRNA + H2O = a 5'-end phospho-ribonucleoside in mRNA + diphosphate + H(+). The catalysed reaction is a 5'-end NAD(+)-phospho-ribonucleoside in mRNA + H2O = a 5'-end phospho-ribonucleoside in mRNA + NAD(+) + H(+). It catalyses the reaction a 5'-end NAD(+)-phospho-ribonucleoside in snoRNA + H2O = a 5'-end phospho-ribonucleoside in snoRNA + NAD(+) + H(+). The enzyme catalyses a 5'-end (N(7)-methyl 5'-triphosphoguanosine)-ribonucleoside-ribonucleotide in mRNA + H2O = a (N(7)-methyl 5'-triphosphoguanosine)-nucleoside + a 5'-end phospho-ribonucleoside in mRNA + H(+). It carries out the reaction a 5'-end FAD-phospho-ribonucleoside in mRNA + H2O = a 5'-end phospho-ribonucleoside in mRNA + FAD + H(+). The catalysed reaction is a 5'-end CoA-ribonucleoside in mRNA + H2O = 3'-dephospho-CoA + a 5'-end phospho-ribonucleoside in mRNA + H(+). Decapping enzyme for NAD-capped RNAs: specifically hydrolyzes the nicotinamide adenine dinucleotide (NAD) cap from a subset of RNAs by removing the entire NAD moiety from the 5'-end of an NAD-capped RNA. The NAD-cap is present at the 5'-end of some RNAs and snoRNAs. In contrast to the canonical 5'-end N7 methylguanosine (m7G) cap, the NAD cap promotes mRNA decay. Preferentially acts on NAD-capped transcripts in response to environmental stress. Also acts as a non-canonical decapping enzyme that removes the entire cap structure of m7G capped or incompletely capped RNAs and mediates their subsequent degradation. Specifically degrades pre-mRNAs with a defective 5'-end m7G cap and is part of a pre-mRNA capping quality control. Has decapping activity toward incomplete 5'-end m7G cap mRNAs such as unmethylated 5'-end-capped RNA (cap0), while it has no activity toward 2'-O-ribose methylated m7G cap (cap1). In contrast to canonical decapping enzymes DCP2 and NUDT16, which cleave the cap within the triphosphate linkage, the decapping activity releases the entire cap structure GpppN and a 5'-end monophosphate RNA. Also has 5'-3' exoribonuclease activities: The 5'-end monophosphate RNA is then degraded by the 5'-3' exoribonuclease activity, enabling this enzyme to decap and degrade incompletely capped mRNAs. Also possesses RNA 5'-pyrophosphohydrolase activity by hydrolyzing the 5'-end triphosphate to release pyrophosphates. Exhibits decapping activity towards FAD-capped RNAs. Exhibits decapping activity towards dpCoA-capped RNAs in vitro. The protein is Decapping and exoribonuclease protein of Homo sapiens (Human).